We begin with the raw amino-acid sequence, 772 residues long: Mitochondrial intermediate peptidase (772 aa).

A mitochondrion-targeting transit peptide spans 1–42 (MFANSARNALKKRPQNLQPFRFQGCLFSKRANRPLTTKVQHL). H556 provides a ligand contact to Zn(2+). E557 is a catalytic residue. Residues H560 and H563 each contribute to the Zn(2+) site.

This sequence belongs to the peptidase M3 family. The cofactor is Zn(2+).

The protein resides in the mitochondrion matrix. It catalyses the reaction Release of an N-terminal octapeptide as second stage of processing of some proteins imported into the mitochondrion.. Functionally, cleaves proteins, imported into the mitochondrion, to their mature size. While most mitochondrial precursor proteins are processed to the mature form in one step by mitochondrial processing peptidase (MPP), the sequential cleavage by MIP of an octapeptide after initial processing by MPP is a required step for a subgroup of nuclear-encoded precursor proteins destined for the matrix or the inner membrane. In Laccaria bicolor (strain S238N-H82 / ATCC MYA-4686) (Bicoloured deceiver), this protein is Mitochondrial intermediate peptidase (OCT1).